A 313-amino-acid chain; its full sequence is Acetyl-coenzyme A carboxylase carboxyl transferase subunit beta, chloroplastic (313 aa).

One can recognise a CoA carboxyltransferase N-terminal domain in the interval 47–313; the sequence is LWTRCDNCEN…SAPCRRSNNS (267 aa). Zn(2+) contacts are provided by cysteine 51, cysteine 54, cysteine 70, and cysteine 73. The C4-type zinc-finger motif lies at 51 to 73; the sequence is CDNCENMLYIRFLRQNKRICEEC.

It belongs to the AccD/PCCB family. As to quaternary structure, acetyl-CoA carboxylase is a heterohexamer composed of biotin carboxyl carrier protein, biotin carboxylase and 2 subunits each of ACCase subunit alpha and ACCase plastid-coded subunit beta (accD). It depends on Zn(2+) as a cofactor.

It is found in the plastid. It localises to the chloroplast stroma. The enzyme catalyses N(6)-carboxybiotinyl-L-lysyl-[protein] + acetyl-CoA = N(6)-biotinyl-L-lysyl-[protein] + malonyl-CoA. Its pathway is lipid metabolism; malonyl-CoA biosynthesis; malonyl-CoA from acetyl-CoA: step 1/1. Component of the acetyl coenzyme A carboxylase (ACC) complex. Biotin carboxylase (BC) catalyzes the carboxylation of biotin on its carrier protein (BCCP) and then the CO(2) group is transferred by the transcarboxylase to acetyl-CoA to form malonyl-CoA. In Anthoceros angustus (Hornwort), this protein is Acetyl-coenzyme A carboxylase carboxyl transferase subunit beta, chloroplastic.